A 100-amino-acid chain; its full sequence is MEINTELIKKLKKLSNIELSPSEEERIKKDLNALLEYQKILDKIDVEGIEEMVSPIEFSTSILRKDEVESFESRKKIINNFPENKDGFLAVPGIHVNEEE.

Belongs to the GatC family. As to quaternary structure, heterotrimer of A, B and C subunits.

It catalyses the reaction L-glutamyl-tRNA(Gln) + L-glutamine + ATP + H2O = L-glutaminyl-tRNA(Gln) + L-glutamate + ADP + phosphate + H(+). It carries out the reaction L-aspartyl-tRNA(Asn) + L-glutamine + ATP + H2O = L-asparaginyl-tRNA(Asn) + L-glutamate + ADP + phosphate + 2 H(+). Allows the formation of correctly charged Asn-tRNA(Asn) or Gln-tRNA(Gln) through the transamidation of misacylated Asp-tRNA(Asn) or Glu-tRNA(Gln) in organisms which lack either or both of asparaginyl-tRNA or glutaminyl-tRNA synthetases. The reaction takes place in the presence of glutamine and ATP through an activated phospho-Asp-tRNA(Asn) or phospho-Glu-tRNA(Gln). In Petrotoga mobilis (strain DSM 10674 / SJ95), this protein is Aspartyl/glutamyl-tRNA(Asn/Gln) amidotransferase subunit C.